Reading from the N-terminus, the 349-residue chain is Probable ethanolamine kinase (349 aa).

The protein belongs to the choline/ethanolamine kinase family.

The protein resides in the cytoplasm. The enzyme catalyses ethanolamine + ATP = phosphoethanolamine + ADP + H(+). It functions in the pathway phospholipid metabolism; phosphatidylethanolamine biosynthesis; phosphatidylethanolamine from ethanolamine: step 1/3. Its function is as follows. Highly specific for ethanolamine phosphorylation. May be a rate-controlling step in phosphatidylethanolamine biosynthesis. This is Probable ethanolamine kinase (etnk) from Nematostella vectensis (Starlet sea anemone).